The sequence spans 67 residues: Cysteine-rich venom protein bucarin (67 aa).

Positions 13–58 constitute an SCP domain; that stretch reads VDKHNALRRSVRPTARNMLQMEWNSNAAQNAKRFADRCTFAHSPPH.

It belongs to the CRISP family. Contains 8 disulfide bonds. As to expression, expressed by the venom gland.

Its subcellular location is the secreted. Its function is as follows. Blocks contraction of smooth muscle elicited by high potassium-induced depolarization, but does not block caffeine-stimulated contraction. May target voltage-gated calcium channels on smooth muscle. The polypeptide is Cysteine-rich venom protein bucarin (Bungarus candidus (Malayan krait)).